The following is a 359-amino-acid chain: Phosphoserine aminotransferase (359 aa).

Position 42 (arginine 42) interacts with L-glutamate. Residues 76-77 (AS), tryptophan 102, threonine 152, aspartate 171, and glutamine 194 contribute to the pyridoxal 5'-phosphate site. Residue lysine 195 is modified to N6-(pyridoxal phosphate)lysine. 236 to 237 (NT) contributes to the pyridoxal 5'-phosphate binding site.

Belongs to the class-V pyridoxal-phosphate-dependent aminotransferase family. SerC subfamily. Homodimer. Requires pyridoxal 5'-phosphate as cofactor.

The protein localises to the cytoplasm. It carries out the reaction O-phospho-L-serine + 2-oxoglutarate = 3-phosphooxypyruvate + L-glutamate. The catalysed reaction is 4-(phosphooxy)-L-threonine + 2-oxoglutarate = (R)-3-hydroxy-2-oxo-4-phosphooxybutanoate + L-glutamate. It participates in amino-acid biosynthesis; L-serine biosynthesis; L-serine from 3-phospho-D-glycerate: step 2/3. The protein operates within cofactor biosynthesis; pyridoxine 5'-phosphate biosynthesis; pyridoxine 5'-phosphate from D-erythrose 4-phosphate: step 3/5. Catalyzes the reversible conversion of 3-phosphohydroxypyruvate to phosphoserine and of 3-hydroxy-2-oxo-4-phosphonooxybutanoate to phosphohydroxythreonine. The polypeptide is Phosphoserine aminotransferase (Ruthia magnifica subsp. Calyptogena magnifica).